The sequence spans 408 residues: uncharacterized protein (408 aa).

Residues Glu-35, Asp-61, and Asn-96 each contribute to the a divalent metal cation site.

It belongs to the metallophosphoesterase superfamily. A divalent metal cation is required as a cofactor.

This is an uncharacterized protein from Bacillus subtilis (strain 168).